The chain runs to 295 residues: Acetylglutamate kinase (295 aa).

Substrate is bound by residues 64-65 (GG), Arg86, and Asn179.

Belongs to the acetylglutamate kinase family. ArgB subfamily.

It localises to the cytoplasm. The catalysed reaction is N-acetyl-L-glutamate + ATP = N-acetyl-L-glutamyl 5-phosphate + ADP. It participates in amino-acid biosynthesis; L-arginine biosynthesis; N(2)-acetyl-L-ornithine from L-glutamate: step 2/4. Functionally, catalyzes the ATP-dependent phosphorylation of N-acetyl-L-glutamate. The chain is Acetylglutamate kinase from Thermosynechococcus vestitus (strain NIES-2133 / IAM M-273 / BP-1).